The following is an 873-amino-acid chain: Envelope glycoprotein B (873 aa).

The N-terminal stretch at 1-21 (MASLKMLICVCVAILIPSTLS) is a signal peptide. Residues 22-740 (QDSHGIAGII…SGIASFLSNP (719 aa)) are Virion surface-facing. 5 cysteine pairs are disulfide-bonded: C67–C525, C84–C481, C157–C219, C311–C359, and C548–C598. N-linked (GlcNAc...) asparagine; by host glycans are attached at residues N92 and N111. The involved in fusion and/or binding to host membrane stretch occupies residues 124–130 (TWALFSR). N-linked (GlcNAc...) asparagine; by host glycosylation occurs at N201. Residues 206-213 (HQTLGYRT) are involved in fusion and/or binding to host membrane. N-linked (GlcNAc...) asparagine; by host glycosylation is found at N252 and N350. Residues 418-447 (QNHLPRGRERRQAAGRRTASLQSGPQGDRI) are disordered. N-linked (GlcNAc...) asparagine; by host glycosylation is found at N569, N625, and N639. Hydrophobic membrane proximal region stretches follow at residues 684-738 (IDTV…SFLS) and 715-734 (LGTV…SGIA). A helical transmembrane segment spans residues 741–761 (FAALGIGIAVVVSIILGLLAF). Over 762–873 (KYVMNLKSNP…PSWAEESEDE (112 aa)) the chain is Intravirion. The tract at residues 781–807 (PPAGTPPRPSRRYYKDEEEVEEDSDED) is disordered. Residues 796-807 (DEEEVEEDSDED) show a composition bias toward acidic residues. The short motif at 858 to 861 (YPLL) is the Internalization motif element.

The protein belongs to the herpesviridae glycoprotein B family. In terms of assembly, homotrimer; disulfide-linked. Binds to heparan sulfate proteoglycans. Interacts with gH/gL heterodimer. Post-translationally, a proteolytic cleavage by host furin generates two subunits that remain linked by disulfide bonds.

The protein localises to the virion membrane. It is found in the host cell membrane. Its subcellular location is the host endosome membrane. It localises to the host Golgi apparatus membrane. Its function is as follows. Envelope glycoprotein that forms spikes at the surface of virion envelope. Essential for the initial attachment to heparan sulfate moieties of the host cell surface proteoglycans. Involved in fusion of viral and cellular membranes leading to virus entry into the host cell. Following initial binding to its host receptors, membrane fusion is mediated by the fusion machinery composed at least of gB and the heterodimer gH/gL. May be involved in the fusion between the virion envelope and the outer nuclear membrane during virion egress. The sequence is that of Envelope glycoprotein B from Infectious laryngotracheitis virus (strain 632) (ILTV).